A 276-amino-acid chain; its full sequence is uncharacterized protein (276 aa).

10 helical membrane-spanning segments follow: residues 5-25 (IVLALTVTFWGLAFTAIKYSV), 31-51 (IAIASLRFAIANTLFAVIIIL), 63-83 (VFALGIFGVSVYHVFLNLGEV), 89-109 (VASVVISLAPIFVLILSAIFL), 119-139 (VGIIIAFLGVVVISEPSYANI), 142-162 (IALVMVSTVAAAIYTTFGKSL), 168-188 (PITLTSNAMVLGSIPLYPFLP), 200-220 (LIGSIVFLGIFSTFFGYLGWY), 231-251 (ASVFLLAIPVVSLLAGNILLA), and 253-273 (PLTLRTVAGSGLVLLGIYIVV). EamA domains lie at 12–133 (TFWG…VISE) and 150–274 (VAAA…IVVR).

This sequence belongs to the EamA transporter family.

The protein localises to the cell membrane. This is an uncharacterized protein from Archaeoglobus fulgidus (strain ATCC 49558 / DSM 4304 / JCM 9628 / NBRC 100126 / VC-16).